A 1032-amino-acid polypeptide reads, in one-letter code: Protein translocase subunit SecA (1032 aa).

Residues glutamine 121, 139 to 143 (GEGKT), and aspartate 570 contribute to the ATP site. The disordered stretch occupies residues 945–975 (TAGGSENATEDAPKPAKRGVGGAARRVSNAA). Residues cysteine 994, cysteine 996, cysteine 1005, and histidine 1006 each coordinate Zn(2+).

This sequence belongs to the SecA family. In terms of assembly, monomer and homodimer. Part of the essential Sec protein translocation apparatus which comprises SecA, SecYEG and auxiliary proteins SecDF. Other proteins may also be involved. Zn(2+) is required as a cofactor.

Its subcellular location is the cell membrane. It localises to the cytoplasm. The catalysed reaction is ATP + H2O + cellular proteinSide 1 = ADP + phosphate + cellular proteinSide 2.. Part of the Sec protein translocase complex. Interacts with the SecYEG preprotein conducting channel. Has a central role in coupling the hydrolysis of ATP to the transfer of proteins into and across the cell membrane, serving as an ATP-driven molecular motor driving the stepwise translocation of polypeptide chains across the membrane. The sequence is that of Protein translocase subunit SecA from Herpetosiphon aurantiacus (strain ATCC 23779 / DSM 785 / 114-95).